Consider the following 97-residue polypeptide: Co-chaperonin GroES (97 aa).

This sequence belongs to the GroES chaperonin family. As to quaternary structure, heptamer of 7 subunits arranged in a ring. Interacts with the chaperonin GroEL.

The protein localises to the cytoplasm. Functionally, together with the chaperonin GroEL, plays an essential role in assisting protein folding. The GroEL-GroES system forms a nano-cage that allows encapsulation of the non-native substrate proteins and provides a physical environment optimized to promote and accelerate protein folding. GroES binds to the apical surface of the GroEL ring, thereby capping the opening of the GroEL channel. This Klebsiella pneumoniae subsp. pneumoniae (strain ATCC 700721 / MGH 78578) protein is Co-chaperonin GroES.